Consider the following 361-residue polypeptide: (S)-coclaurine N-methyltransferase (361 aa).

7 residues coordinate S-adenosyl-L-methionine: serine 101, glycine 139, asparagine 163, glutamine 167, aspartate 189, isoleucine 190, and valine 205. The active site involves cysteine 336.

It belongs to the CFA/CMAS family. In terms of assembly, homodimer. As to expression, highly expressed in rhizomes. Detected in roots, petioles, flower buds and leaves. Expressed between the developing stele and ground tissues near the root apical meristem, in the immature endodermis, the pericycle and the spokes of developing xylem in the apical region of the root and in the protoderm of leaf primordia in rhizomes.

It is found in the cytoplasm. It carries out the reaction norreticuline + S-adenosyl-L-methionine = reticuline + S-adenosyl-L-homocysteine + H(+). The enzyme catalyses (S)-coclaurine + S-adenosyl-L-methionine = (S)-N-methylcoclaurine + S-adenosyl-L-homocysteine + H(+). It catalyses the reaction heliamine + S-adenosyl-L-methionine = N-methylheliamine + S-adenosyl-L-homocysteine + H(+). The protein operates within alkaloid biosynthesis. In terms of biological role, involved in the biosynthesis of protoberberine alkaloids. N-methyltransferase with a substrate preference for (R,S)-norreticuline but also active with dimethoxytetrahydroisoquinoline. In Thalictrum flavum subsp. glaucum (Yellow meadow rue), this protein is (S)-coclaurine N-methyltransferase.